We begin with the raw amino-acid sequence, 206 residues long: N-(5'-phosphoribosyl)anthranilate isomerase (206 aa).

Belongs to the TrpF family.

The catalysed reaction is N-(5-phospho-beta-D-ribosyl)anthranilate = 1-(2-carboxyphenylamino)-1-deoxy-D-ribulose 5-phosphate. It participates in amino-acid biosynthesis; L-tryptophan biosynthesis; L-tryptophan from chorismate: step 3/5. This chain is N-(5'-phosphoribosyl)anthranilate isomerase, found in Rubrobacter xylanophilus (strain DSM 9941 / JCM 11954 / NBRC 16129 / PRD-1).